Here is a 611-residue protein sequence, read N- to C-terminus: Probable cysteine desulfurase 1 (611 aa).

The interval 1 to 208 (MRATQLYAAS…HEMVDVFDIQ (208 aa)) is cargo-loading domain. Lysine 428 carries the post-translational modification N6-(pyridoxal phosphate)lysine. Residue cysteine 566 is the Cysteine persulfide intermediate of the active site.

Belongs to the class-V pyridoxal-phosphate-dependent aminotransferase family. Csd subfamily. There are 1-2 copies of this protein in each type 2A encapsulin shell. Requires pyridoxal 5'-phosphate as cofactor.

It localises to the encapsulin nanocompartment. The catalysed reaction is (sulfur carrier)-H + L-cysteine = (sulfur carrier)-SH + L-alanine. Cargo protein of a type 2A encapsulin nanocompartment involved in sulfur metabolism. Cysteine desulfurases mobilize the sulfur from L-cysteine to yield L-alanine, an essential step in sulfur metabolism for biosynthesis of a variety of sulfur-containing biomolecules. In Mycobacterium leprae (strain TN), this protein is Probable cysteine desulfurase 1.